The chain runs to 2201 residues: RNA-directed RNA polymerase L (2201 aa).

The endonuclease stretch occupies residues 26–285 (KNIMLAQTQI…VCSKSVEYTF (260 aa)). 3 residues coordinate Mn(2+): Glu51, Asp88, and Glu101. Lys114 is a catalytic residue. The RdRp catalytic domain occupies 1156–1352 (LDMKSVVRQS…FLSDRLNKFV (197 aa)). Asp1312 is a Mg(2+) binding site.

It belongs to the Bunyavirales RNA polymerase family. In terms of assembly, homomultimer; the oligomeric structure is essential for the polymerase activity. Interacts with nucleoprotein N. Interacts with protein Z; this interaction inhibits viral transcription and replication, Z partially blocks the product exit tunnel for the releasing nascent RNA product. Requires Mn(2+) as cofactor. Mg(2+) is required as a cofactor.

It localises to the virion. Its subcellular location is the host cytoplasm. The enzyme catalyses RNA(n) + a ribonucleoside 5'-triphosphate = RNA(n+1) + diphosphate. Functionally, RNA-dependent RNA polymerase, which is responsible for the replication and transcription of the viral RNA genome using antigenomic RNA as an intermediate. During transcription, synthesizes subgenomic RNAs and assures their capping by a cap-snatching mechanism, which involves the endonuclease activity cleaving the host capped pre-mRNAs. These short capped RNAs are then used as primers for viral transcription. The 3'-end of subgenomic mRNAs molecules are heterogeneous and not polyadenylated. The replicase function is to direct synthesis of antigenomic and genomic RNA which are encapsidated and non capped. As a consequence of the use of the same enzyme for both transcription and replication, these mechanisms need to be well coordinated. These processes may be regulated by proteins N and Z in a dose-dependent manner. Z protein inhibits the viral polymerase L und thus the viral transcription and RNA synthesis. In Oecomys bicolor (Bicolored arboreal rice rat), this protein is RNA-directed RNA polymerase L.